The primary structure comprises 188 residues: dCTP deaminase (188 aa).

Residues 111–116 (KSTYAR), 135–137 (TLE), Gln156, Tyr170, Lys179, and Gln180 contribute to the dCTP site. The active-site Proton donor/acceptor is the Glu137.

Belongs to the dCTP deaminase family. As to quaternary structure, homotrimer.

The enzyme catalyses dCTP + H2O + H(+) = dUTP + NH4(+). Its pathway is pyrimidine metabolism; dUMP biosynthesis; dUMP from dCTP (dUTP route): step 1/2. In terms of biological role, catalyzes the deamination of dCTP to dUTP. The sequence is that of dCTP deaminase from Rickettsia canadensis (strain McKiel).